A 299-amino-acid polypeptide reads, in one-letter code: Protoheme IX farnesyltransferase (299 aa).

The next 9 membrane-spanning stretches (helical) occupy residues 27 to 47 (VVAL…HEHF), 53 to 73 (LIAL…NHLI), 97 to 117 (FNVL…LMLW), 121 to 141 (LTAY…TLYL), 149 to 169 (IVIA…SITG), 175 to 195 (AWLL…ALAI), 222 to 242 (ILLY…VGMA), 244 to 264 (YLYL…AIKL), and 273 to 293 (AIEM…ALLL).

Belongs to the UbiA prenyltransferase family. Protoheme IX farnesyltransferase subfamily.

It is found in the cell inner membrane. It catalyses the reaction heme b + (2E,6E)-farnesyl diphosphate + H2O = Fe(II)-heme o + diphosphate. It functions in the pathway porphyrin-containing compound metabolism; heme O biosynthesis; heme O from protoheme: step 1/1. In terms of biological role, converts heme B (protoheme IX) to heme O by substitution of the vinyl group on carbon 2 of heme B porphyrin ring with a hydroxyethyl farnesyl side group. The protein is Protoheme IX farnesyltransferase of Vibrio vulnificus (strain YJ016).